Here is a 376-residue protein sequence, read N- to C-terminus: Alpha-centractin (376 aa).

Residue methionine 1 is modified to N-acetylmethionine.

Belongs to the actin family. ARP1 subfamily. As to quaternary structure, part of the ACTR1A/ACTB filament around which the dynactin complex is built. The filament contains 8 copies of ACTR1A and 1 ACTB. Interacts with dynein and adapters such as BICD2. Interacts with BCCIP (isoform 2/alpha).

The protein localises to the cytoplasm. Its subcellular location is the cytoskeleton. It is found in the microtubule organizing center. It localises to the centrosome. The protein resides in the cell cortex. Its function is as follows. Part of the ACTR1A/ACTB filament around which the dynactin complex is built. The dynactin multiprotein complex activates the molecular motor dynein for ultra-processive transport along microtubules. The protein is Alpha-centractin (ACTR1A) of Canis lupus familiaris (Dog).